The primary structure comprises 550 residues: Chaperonin GroEL (550 aa).

ATP-binding positions include T29–P32, K50, D86–T90, G416, and D498.

The protein belongs to the chaperonin (HSP60) family. Forms a cylinder of 14 subunits composed of two heptameric rings stacked back-to-back. Interacts with the co-chaperonin GroES.

Its subcellular location is the cytoplasm. The enzyme catalyses ATP + H2O + a folded polypeptide = ADP + phosphate + an unfolded polypeptide.. In terms of biological role, together with its co-chaperonin GroES, plays an essential role in assisting protein folding. The GroEL-GroES system forms a nano-cage that allows encapsulation of the non-native substrate proteins and provides a physical environment optimized to promote and accelerate protein folding. This chain is Chaperonin GroEL, found in Anaplasma phagocytophilum (strain HZ).